Consider the following 485-residue polypeptide: Glutamyl-tRNA(Gln) amidotransferase subunit A (485 aa).

Residues lysine 79 and serine 154 each act as charge relay system in the active site. Residue serine 178 is the Acyl-ester intermediate of the active site.

Belongs to the amidase family. GatA subfamily. In terms of assembly, heterotrimer of A, B and C subunits.

The enzyme catalyses L-glutamyl-tRNA(Gln) + L-glutamine + ATP + H2O = L-glutaminyl-tRNA(Gln) + L-glutamate + ADP + phosphate + H(+). Functionally, allows the formation of correctly charged Gln-tRNA(Gln) through the transamidation of misacylated Glu-tRNA(Gln) in organisms which lack glutaminyl-tRNA synthetase. The reaction takes place in the presence of glutamine and ATP through an activated gamma-phospho-Glu-tRNA(Gln). This Geobacillus stearothermophilus (Bacillus stearothermophilus) protein is Glutamyl-tRNA(Gln) amidotransferase subunit A.